The chain runs to 290 residues: Concanavalin-A (290 aa).

A signal peptide spans 1 to 29 (MAISKKSSLFLPIFTFITMFLMVVNKVSS). Positions 119 and 139 each coordinate a carbohydrate. Asp119 contacts Ca(2+). Residues 149–163 (VIRNSTTIDFNAAYN) constitute a propeptide that is removed on maturation. Asn152 carries N-linked (GlcNAc...) asparagine glycosylation. The Mn(2+) site is built by Glu171 and Asp173. Ca(2+)-binding residues include Asp173, Tyr175, Asn177, and Asp182. 2 residues coordinate Mn(2+): Asp182 and His187. 262-263 (LY) is a binding site for a carbohydrate. Positions 282-290 (EIPDIATVV) are excised as a propeptide.

The protein belongs to the leguminous lectin family. Homotetramer. In terms of processing, the mature chain consists of residues 164-281 followed by 30-148. To form a mature chain the precursor undergoes further post-translational modification after removal of the signal sequence; cleavage after Asn at positions Asn-148, Asn-163, and Asn-281 is followed by transposition and ligation (By formation of a new peptide bond) of residues 164-281 and 30-148.

Its function is as follows. Glucose/D-mannose/rhamnose specific lectin. Has hemagglutinating activity towards rabbit erythrocytes. Has mitogenic activity towards murine splenocytes that is inhibited by glucose. Inhibits HIV-1 reverse transcriptase with an IC(50) of 35 uM. Has a potent antiproliferative activity against L1210 leukemia cells in vitro that is not inhibited by glucose. Inhibits translation in cell-free rabbit reticulocyte system with an IC(50) of 2.08 uM. Lacks anti-fungal activity against M.arachidicola, B.cenera and F.oxysporum. This chain is Concanavalin-A, found in Canavalia gladiata (Sword bean).